A 90-amino-acid polypeptide reads, in one-letter code: Putative membrane protein insertion efficiency factor (90 aa).

It belongs to the UPF0161 family.

Its subcellular location is the cell membrane. Its function is as follows. Could be involved in insertion of integral membrane proteins into the membrane. This is Putative membrane protein insertion efficiency factor from Lactococcus lactis subsp. cremoris (strain MG1363).